Here is a 588-residue protein sequence, read N- to C-terminus: Adenine deaminase (588 aa).

This sequence belongs to the metallo-dependent hydrolases superfamily. Adenine deaminase family. As to quaternary structure, homodimer. It depends on Mn(2+) as a cofactor.

It catalyses the reaction adenine + H2O + H(+) = hypoxanthine + NH4(+). This is Adenine deaminase from Escherichia coli (strain 55989 / EAEC).